The sequence spans 532 residues: Cocaine esterase (532 aa).

Glutamine 1 bears the Pyrrolidone carboxylic acid mark. An intrachain disulfide couples cysteine 69 to cysteine 96. Catalysis depends on serine 201, which acts as the Acyl-ester intermediate. A glycan (N-linked (GlcNAc...) asparagine) is linked at asparagine 249. Cysteine 253 and cysteine 264 are oxidised to a cystine. Catalysis depends on charge relay system residues glutamate 318 and histidine 430. The Prevents secretion from ER signature appears at 529–532; that stretch reads HTEL.

This sequence belongs to the type-B carboxylesterase/lipase family. Monomer.

It is found in the endoplasmic reticulum lumen. The catalysed reaction is a carboxylic ester + H2O = an alcohol + a carboxylate + H(+). It catalyses the reaction cocaine + H2O = ecgonine methyl ester + benzoate + H(+). The enzyme catalyses 2-(5Z,8Z,11Z,14Z-eicosatetraenoyl)-glycerol + H2O = glycerol + (5Z,8Z,11Z,14Z)-eicosatetraenoate + H(+). It carries out the reaction prostaglandin E2 1-glyceryl ester + H2O = prostaglandin E2 + glycerol + H(+). The catalysed reaction is prostaglandin F2alpha 1-glyceryl ester + H2O = prostaglandin F2alpha + glycerol + H(+). Involved in the detoxification of xenobiotics and in the activation of ester and amide prodrugs. Converts monoacylglycerides to free fatty acids and glycerol. Hydrolyzes of 2-arachidonoylglycerol and prostaglandins. This is Cocaine esterase (CES2) from Oryctolagus cuniculus (Rabbit).